A 250-amino-acid chain; its full sequence is MYIFLMYGLEVKQLKLLYNLPKVFLTPNLNKFSITRNYVDCAYYESRSGLTREGCIIFDGNVHRTRGIYYIPVPSAVELSYRRKMIKDEQDVKQIIEKINLYGATLNTNKLLVKWNNYEIILYDRFIKGGMYEFPLLFSQGHLYVYNIPRVREAYRIIYENDNQKEEIDSEMFEEINEFSVYNHAIKFDKKVLKLKELYVSPGQGVVIYTLDDVTLVSESPDHNKIEKFVYKNSWILFSHRAPRNQDQRD.

This is an uncharacterized protein from Sulfolobus islandicus filamentous virus (isolate Iceland/Hveragerdi) (SIFV).